A 284-amino-acid polypeptide reads, in one-letter code: 4-diphosphocytidyl-2-C-methyl-D-erythritol kinase (284 aa).

K10 is an active-site residue. 92-102 (PYGAGLGSGSS) is an ATP binding site. The active site involves D134.

The protein belongs to the GHMP kinase family. IspE subfamily.

The enzyme catalyses 4-CDP-2-C-methyl-D-erythritol + ATP = 4-CDP-2-C-methyl-D-erythritol 2-phosphate + ADP + H(+). Its pathway is isoprenoid biosynthesis; isopentenyl diphosphate biosynthesis via DXP pathway; isopentenyl diphosphate from 1-deoxy-D-xylulose 5-phosphate: step 3/6. Functionally, catalyzes the phosphorylation of the position 2 hydroxy group of 4-diphosphocytidyl-2C-methyl-D-erythritol. The polypeptide is 4-diphosphocytidyl-2-C-methyl-D-erythritol kinase (Salinibacter ruber (strain DSM 13855 / M31)).